We begin with the raw amino-acid sequence, 398 residues long: MTNRVVLAYSGGLDTSVAIPYLSKMTDGEVVAVSIDLGQGGEDMESVRQRALACGAVEAIVVDAKDEFAEQYCLPAIKANGLYMKQYPLVSALSRPLIVKHLVETAKEHGGTHVAHGCTGKGNDQVRFEVGFADTAPDLKIIAPARDYAWTRDKAIAFAEEIDLPIEQSASSPFSIDQNVWGRAVETGFLEDLWNPPTKDLYAYTEEPSLGNAPDEVVISFEGGKPVAIDGRPVSVLEAIEEMNRRGGAQGVGRLDMVEDRLVGIKSREVYEAPGAMVLIRAHEALEDITVERELARYKRGIDARWSEEVYDGLWFAPLKRSLDAFIDSTQENVTGDIRLVLHEGRITVNGRRSEKSLYDFNLATYDTGDTFDQTLSRGFVELHGLSSKIACKRDREQ.

ATP is bound at residue 8–16 (AYSGGLDTS). Y87 lines the L-citrulline pocket. Residue G117 participates in ATP binding. The L-aspartate site is built by T119, N123, and D124. An L-citrulline-binding site is contributed by N123. L-citrulline-binding residues include R127, S175, E259, and Y271.

This sequence belongs to the argininosuccinate synthase family. Type 1 subfamily. In terms of assembly, homotetramer.

It is found in the cytoplasm. It carries out the reaction L-citrulline + L-aspartate + ATP = 2-(N(omega)-L-arginino)succinate + AMP + diphosphate + H(+). It participates in amino-acid biosynthesis; L-arginine biosynthesis; L-arginine from L-ornithine and carbamoyl phosphate: step 2/3. The sequence is that of Argininosuccinate synthase from Corynebacterium kroppenstedtii (strain DSM 44385 / JCM 11950 / CIP 105744 / CCUG 35717).